A 274-amino-acid polypeptide reads, in one-letter code: Large ribosomal subunit protein uL2cz/uL2cy (274 aa).

Residues 225–274 (PVDHPHGGGEGRAPIGRKKPVTPWGYPALGRRTRKRKKYSETLILRRRSK) form a disordered region.

This sequence belongs to the universal ribosomal protein uL2 family. In terms of assembly, part of the 50S ribosomal subunit.

The protein resides in the plastid. The protein localises to the chloroplast. The sequence is that of Large ribosomal subunit protein uL2cz/uL2cy (rpl2-A) from Crucihimalaya wallichii (Rock-cress).